A 138-amino-acid polypeptide reads, in one-letter code: Proline-rich protein 34 (138 aa).

Over residues S22 to G37 the composition is skewed to pro residues. Disordered regions lie at residues S22–G55 and A81–R107.

This is Proline-rich protein 34 (PRR34) from Homo sapiens (Human).